A 387-amino-acid chain; its full sequence is Patatin group D-3 (387 aa).

Residues 1–23 form the signal peptide; that stretch reads MATTKSFLILIVMILATTSSTFA. The region spanning 32-230 is the PNPLA domain; the sequence is LSIDGGGIKG…TVADPALLSI (199 aa). A GXGXXG motif is present at residues 36-41; it reads GGGIKG. A GXSXG motif is present at residues 75–79; it reads GTSTG. The Nucleophile role is filled by Ser77. Asn115 carries an N-linked (GlcNAc...) asparagine glycan. The active-site Proton acceptor is the Asp216. The DGA/G motif lies at 216–218; it reads DGA. Residues 361 to 385 are a coiled coil; sequence ETYEEALKRFAKLLSDRKKLRANKA.

This sequence belongs to the patatin family. In terms of tissue distribution, tuber.

It is found in the vacuole. Probable lipolytic acyl hydrolase (LAH), an activity which is thought to be involved in the response of tubers to pathogens. The chain is Patatin group D-3 from Solanum tuberosum (Potato).